Reading from the N-terminus, the 590-residue chain is Aspartate--tRNA ligase (590 aa).

Glu-174 is an L-aspartate binding site. The aspartate stretch occupies residues 198 to 201 (QLMK). Arg-220 is an L-aspartate binding site. ATP is bound by residues 220–222 (RDE) and Gln-229. His-443 is a binding site for L-aspartate. Glu-484 is an ATP binding site. Arg-491 lines the L-aspartate pocket. 536 to 539 (GLDR) is an ATP binding site.

This sequence belongs to the class-II aminoacyl-tRNA synthetase family. Type 1 subfamily. As to quaternary structure, homodimer.

The protein localises to the cytoplasm. The enzyme catalyses tRNA(Asp) + L-aspartate + ATP = L-aspartyl-tRNA(Asp) + AMP + diphosphate. In terms of biological role, catalyzes the attachment of L-aspartate to tRNA(Asp) in a two-step reaction: L-aspartate is first activated by ATP to form Asp-AMP and then transferred to the acceptor end of tRNA(Asp). The protein is Aspartate--tRNA ligase of Lactococcus lactis subsp. cremoris (strain SK11).